The primary structure comprises 351 residues: MIEKLEELRAQWRKLQQEVENPSLFSSTQSYRERMRDHAYLSRLMEEYDRYLLTEKQLEDAHVLIQDESDADFKDVIRQEIRTLEAALHTSQKRLKTLLIPPDSLQEKNIIMEIRGGTGGDEAALFAADLFRMYTHYAESKQWRYEVLAVSETELGGFKEITFSISGRDVYGSLRYESGVHRVQRVPSTEASGRIHTSAVTVAVLPEMEETEVDIRAEDVRVDVMRASGPGGQCVNTTDSAVRLTHLPTGIVVVCQDEKSQIKNKAKAMRVLRSRVYDLEESKRQVARARERKSQVGSGDRSERIRTYNFPQNRVTDHRVRVTLYKLDAVMQGALDDIIEPLCIASRESVI.

Glutamine 233 carries the post-translational modification N5-methylglutamine.

Belongs to the prokaryotic/mitochondrial release factor family. Post-translationally, methylated by PrmC. Methylation increases the termination efficiency of RF1.

Its subcellular location is the cytoplasm. Peptide chain release factor 1 directs the termination of translation in response to the peptide chain termination codons UAG and UAA. In Treponema pallidum (strain Nichols), this protein is Peptide chain release factor 1 (prfA).